The primary structure comprises 158 residues: NADPH-dependent 7-cyano-7-deazaguanine reductase (158 aa).

The tract at residues 1 to 37 (MAKRSIKSETSPELQLGRPVTAPDSPETARLDRVPNP) is disordered. Over residues 27–37 (ETARLDRVPNP) the composition is skewed to basic and acidic residues. Catalysis depends on Cys-56, which acts as the Thioimide intermediate. The active-site Proton donor is Asp-63. Substrate is bound by residues 78–80 (VES) and 97–98 (HE).

It belongs to the GTP cyclohydrolase I family. QueF type 1 subfamily.

The protein resides in the cytoplasm. It carries out the reaction 7-aminomethyl-7-carbaguanine + 2 NADP(+) = 7-cyano-7-deazaguanine + 2 NADPH + 3 H(+). It functions in the pathway tRNA modification; tRNA-queuosine biosynthesis. Catalyzes the NADPH-dependent reduction of 7-cyano-7-deazaguanine (preQ0) to 7-aminomethyl-7-deazaguanine (preQ1). In Bradyrhizobium sp. (strain BTAi1 / ATCC BAA-1182), this protein is NADPH-dependent 7-cyano-7-deazaguanine reductase.